The sequence spans 432 residues: Ribulose bisphosphate carboxylase-like protein 2 (432 aa).

Mg(2+)-binding residues include K198, D200, and E201. Position 198 is an N6-carboxylysine (K198).

It belongs to the RuBisCO large chain family. Type IV subfamily. Homodimer. Mg(2+) serves as cofactor.

Functionally, may be involved in sulfur metabolism and oxidative stress response. Does not show RuBisCO activity. This chain is Ribulose bisphosphate carboxylase-like protein 2 (rlp2), found in Rhodopseudomonas palustris (strain ATCC BAA-98 / CGA009).